The chain runs to 485 residues: Aspartyl/glutamyl-tRNA(Asn/Gln) amidotransferase subunit B (485 aa).

This sequence belongs to the GatB/GatE family. GatB subfamily. Heterotrimer of A, B and C subunits.

The catalysed reaction is L-glutamyl-tRNA(Gln) + L-glutamine + ATP + H2O = L-glutaminyl-tRNA(Gln) + L-glutamate + ADP + phosphate + H(+). It carries out the reaction L-aspartyl-tRNA(Asn) + L-glutamine + ATP + H2O = L-asparaginyl-tRNA(Asn) + L-glutamate + ADP + phosphate + 2 H(+). Its function is as follows. Allows the formation of correctly charged Asn-tRNA(Asn) or Gln-tRNA(Gln) through the transamidation of misacylated Asp-tRNA(Asn) or Glu-tRNA(Gln) in organisms which lack either or both of asparaginyl-tRNA or glutaminyl-tRNA synthetases. The reaction takes place in the presence of glutamine and ATP through an activated phospho-Asp-tRNA(Asn) or phospho-Glu-tRNA(Gln). The polypeptide is Aspartyl/glutamyl-tRNA(Asn/Gln) amidotransferase subunit B (Borrelia garinii subsp. bavariensis (strain ATCC BAA-2496 / DSM 23469 / PBi) (Borreliella bavariensis)).